The following is a 418-amino-acid chain: Hydroxysteroid dehydrogenase-like protein 2 (418 aa).

NADP(+) contacts are provided by residues 17–23, Lys-42, and Asp-74; that span reads GASRGIG. Lys-42 carries the N6-(2-hydroxyisobutyryl)lysine modification. Lys-116 bears the N6-acetyllysine mark. The Proton acceptor role is filled by Tyr-168. Residue Lys-172 participates in NADP(+) binding. The interval 287–310 is disordered; the sequence is STGAVPEFKEEKPQPQPKPRSGAV. The SCP2 domain maps to 306-415; the sequence is RSGAVEETFR…KLEKLMNQMN (110 aa). At Lys-318 the chain carries N6-succinyllysine.

This sequence belongs to the short-chain dehydrogenases/reductases (SDR) family.

It is found in the peroxisome. Its subcellular location is the mitochondrion. Functionally, has apparently no steroid dehydrogenase activity. Controls bile acid (BA) and lipid metabolism in response to nutritional cues. The polypeptide is Hydroxysteroid dehydrogenase-like protein 2 (HSDL2) (Pongo abelii (Sumatran orangutan)).